The sequence spans 308 residues: Transaldolase (308 aa).

Lys125 (schiff-base intermediate with substrate) is an active-site residue.

The protein belongs to the transaldolase family. Type 1 subfamily. In terms of assembly, homodimer.

It is found in the cytoplasm. It catalyses the reaction D-sedoheptulose 7-phosphate + D-glyceraldehyde 3-phosphate = D-erythrose 4-phosphate + beta-D-fructose 6-phosphate. The protein operates within carbohydrate degradation; pentose phosphate pathway; D-glyceraldehyde 3-phosphate and beta-D-fructose 6-phosphate from D-ribose 5-phosphate and D-xylulose 5-phosphate (non-oxidative stage): step 2/3. Its function is as follows. Transaldolase is important for the balance of metabolites in the pentose-phosphate pathway. The protein is Transaldolase of Pseudomonas fluorescens (strain ATCC BAA-477 / NRRL B-23932 / Pf-5).